Reading from the N-terminus, the 316-residue chain is Calumenin-B (316 aa).

The first 19 residues, M1–S19, serve as a signal peptide directing secretion. EF-hand domains follow at residues E69–R104, W105–D140, Q152–D187, M189–D224, W230–D265, and H266–S301. Residues D82, D84, D86, Y88, E93, D118, N120, D122, and E129 each contribute to the Ca(2+) site. Residue N132 is glycosylated (N-linked (GlcNAc...) asparagine). Positions 165, 167, 169, 171, 176, 202, 204, 206, 213, 243, 245, 247, 249, 254, 279, 281, 283, 285, and 290 each coordinate Ca(2+). A Prevents secretion from ER motif is present at residues H313 to F316.

It belongs to the CREC family. As to quaternary structure, interacts with ggcx.

The protein resides in the endoplasmic reticulum membrane. The protein localises to the golgi apparatus. Its subcellular location is the secreted. It localises to the melanosome. It is found in the sarcoplasmic reticulum lumen. Its function is as follows. Involved in regulation of vitamin K-dependent carboxylation of multiple N-terminal glutamate residues. Seems to inhibit gamma-carboxylase ggcx. Binds 7 calcium ions with a low affinity. The sequence is that of Calumenin-B (calub) from Salmo salar (Atlantic salmon).